The chain runs to 260 residues: Proteasome subunit alpha (260 aa).

Positions 241-260 (VEEEEVKEKEEDYSELDSHY) are disordered.

This sequence belongs to the peptidase T1A family. As to quaternary structure, the 20S proteasome core is composed of 14 alpha and 14 beta subunits that assemble into four stacked heptameric rings, resulting in a barrel-shaped structure. The two inner rings, each composed of seven catalytic beta subunits, are sandwiched by two outer rings, each composed of seven alpha subunits. The catalytic chamber with the active sites is on the inside of the barrel. Has a gated structure, the ends of the cylinder being occluded by the N-termini of the alpha-subunits. Is capped at one or both ends by the proteasome regulatory ATPase, PAN.

Its subcellular location is the cytoplasm. With respect to regulation, the formation of the proteasomal ATPase PAN-20S proteasome complex, via the docking of the C-termini of PAN into the intersubunit pockets in the alpha-rings, triggers opening of the gate for substrate entry. Interconversion between the open-gate and close-gate conformations leads to a dynamic regulation of the 20S proteasome proteolysis activity. In terms of biological role, component of the proteasome core, a large protease complex with broad specificity involved in protein degradation. The sequence is that of Proteasome subunit alpha from Pyrococcus horikoshii (strain ATCC 700860 / DSM 12428 / JCM 9974 / NBRC 100139 / OT-3).